A 223-amino-acid chain; its full sequence is Na(+)-translocating NADH-quinone reductase subunit D (223 aa).

The next 5 helical transmembrane spans lie at 42-62 (TVMA…ISMI), 66-86 (IPSS…VIVV), 103-123 (VFVG…AFAM), 131-151 (FFDG…LGFI), and 178-198 (NGLL…IWAL).

The protein belongs to the NqrDE/RnfAE family. In terms of assembly, composed of six subunits; NqrA, NqrB, NqrC, NqrD, NqrE and NqrF.

It localises to the cell inner membrane. It carries out the reaction a ubiquinone + n Na(+)(in) + NADH + H(+) = a ubiquinol + n Na(+)(out) + NAD(+). Its function is as follows. NQR complex catalyzes the reduction of ubiquinone-1 to ubiquinol by two successive reactions, coupled with the transport of Na(+) ions from the cytoplasm to the periplasm. NqrA to NqrE are probably involved in the second step, the conversion of ubisemiquinone to ubiquinol. This Pseudomonas paraeruginosa (strain DSM 24068 / PA7) (Pseudomonas aeruginosa (strain PA7)) protein is Na(+)-translocating NADH-quinone reductase subunit D.